We begin with the raw amino-acid sequence, 338 residues long: Bifunctional methylenetetrahydrofolate dehydrogenase/cyclohydrolase 2, mitochondrial (338 aa).

Residues tyrosine 89–lysine 93 and valine 136–leucine 138 each bind substrate. NAD(+) contacts are provided by residues glycine 205–serine 207 and arginine 238. Residue proline 314–glycine 318 coordinates substrate.

The protein belongs to the tetrahydrofolate dehydrogenase/cyclohydrolase family. The cofactor is Mg(2+). Widely expressed.

The protein resides in the mitochondrion inner membrane. The enzyme catalyses (6R)-5,10-methylene-5,6,7,8-tetrahydrofolate + NADP(+) = (6R)-5,10-methenyltetrahydrofolate + NADPH. The catalysed reaction is (6R)-5,10-methylene-5,6,7,8-tetrahydrofolate + NAD(+) = (6R)-5,10-methenyltetrahydrofolate + NADH. It catalyses the reaction (6R)-5,10-methenyltetrahydrofolate + H2O = (6R)-10-formyltetrahydrofolate + H(+). It functions in the pathway one-carbon metabolism; tetrahydrofolate interconversion. In terms of biological role, bifunctional mitochondrial folate-interconverting enzyme that has both NAD/NADP-dependent methylenetetrahydrofolate dehydrogenase and methenyltetrahydrofolate cyclohydrolase activities. Its function is as follows. Has no NAD/NADP-dependent methylenetetrahydrofolate dehydrogenase activity. In Rattus norvegicus (Rat), this protein is Bifunctional methylenetetrahydrofolate dehydrogenase/cyclohydrolase 2, mitochondrial.